Reading from the N-terminus, the 56-residue chain is Zinc finger mu-protein HVO_0758 (56 aa).

Residues Cys-23, Cys-26, Cys-45, and Cys-48 each contribute to the Zn(2+) site. Short sequence motifs (c(P)XCG motif) lie at residues 23 to 27 (CSECG) and 45 to 49 (CADCG).

Monomer.

Zinc-binding protein that binds one zinc ion. Is involved in biofilm formation, swarming and glycerol metabolism regulation. This chain is Zinc finger mu-protein HVO_0758, found in Haloferax volcanii (strain ATCC 29605 / DSM 3757 / JCM 8879 / NBRC 14742 / NCIMB 2012 / VKM B-1768 / DS2) (Halobacterium volcanii).